Consider the following 371-residue polypeptide: Queuine tRNA-ribosyltransferase (371 aa).

Residue aspartate 90 is the Proton acceptor of the active site. Residues 90-94 (DSGGF), aspartate 144, glutamine 188, and glycine 215 each bind substrate. The RNA binding stretch occupies residues 246–252 (GVGTPED). Aspartate 265 serves as the catalytic Nucleophile. Residues 270 to 274 (TRNAR) form an RNA binding; important for wobble base 34 recognition region. Residues cysteine 303, cysteine 305, cysteine 308, and histidine 334 each contribute to the Zn(2+) site.

This sequence belongs to the queuine tRNA-ribosyltransferase family. Homodimer. Within each dimer, one monomer is responsible for RNA recognition and catalysis, while the other monomer binds to the replacement base PreQ1. Zn(2+) is required as a cofactor.

The enzyme catalyses 7-aminomethyl-7-carbaguanine + guanosine(34) in tRNA = 7-aminomethyl-7-carbaguanosine(34) in tRNA + guanine. The protein operates within tRNA modification; tRNA-queuosine biosynthesis. Catalyzes the base-exchange of a guanine (G) residue with the queuine precursor 7-aminomethyl-7-deazaguanine (PreQ1) at position 34 (anticodon wobble position) in tRNAs with GU(N) anticodons (tRNA-Asp, -Asn, -His and -Tyr). Catalysis occurs through a double-displacement mechanism. The nucleophile active site attacks the C1' of nucleotide 34 to detach the guanine base from the RNA, forming a covalent enzyme-RNA intermediate. The proton acceptor active site deprotonates the incoming PreQ1, allowing a nucleophilic attack on the C1' of the ribose to form the product. After dissociation, two additional enzymatic reactions on the tRNA convert PreQ1 to queuine (Q), resulting in the hypermodified nucleoside queuosine (7-(((4,5-cis-dihydroxy-2-cyclopenten-1-yl)amino)methyl)-7-deazaguanosine). This chain is Queuine tRNA-ribosyltransferase, found in Neisseria gonorrhoeae (strain NCCP11945).